A 154-amino-acid chain; its full sequence is Urease accessory protein UreE (154 aa).

The protein belongs to the UreE family.

The protein resides in the cytoplasm. Involved in urease metallocenter assembly. Binds nickel. Probably functions as a nickel donor during metallocenter assembly. The protein is Urease accessory protein UreE of Prochlorococcus marinus subsp. pastoris (strain CCMP1986 / NIES-2087 / MED4).